The sequence spans 278 residues: Phosphatidylglycerol--prolipoprotein diacylglyceryl transferase (278 aa).

4 consecutive transmembrane segments (helical) span residues 12–32 (FGPL…LIGL), 44–64 (LENG…VIGA), 86–106 (IWEG…TLIL), and 113–133 (QPFL…QAIG). Residue arginine 134 participates in a 1,2-diacyl-sn-glycero-3-phospho-(1'-sn-glycerol) binding. The next 3 helical transmembrane spans lie at 173 to 193 (PTFL…LVLF), 203 to 223 (FPAG…RIWI), and 246 to 266 (IAQL…WWLK).

This sequence belongs to the Lgt family.

The protein localises to the cell inner membrane. The catalysed reaction is L-cysteinyl-[prolipoprotein] + a 1,2-diacyl-sn-glycero-3-phospho-(1'-sn-glycerol) = an S-1,2-diacyl-sn-glyceryl-L-cysteinyl-[prolipoprotein] + sn-glycerol 1-phosphate + H(+). The protein operates within protein modification; lipoprotein biosynthesis (diacylglyceryl transfer). In terms of biological role, catalyzes the transfer of the diacylglyceryl group from phosphatidylglycerol to the sulfhydryl group of the N-terminal cysteine of a prolipoprotein, the first step in the formation of mature lipoproteins. In Parasynechococcus marenigrum (strain WH8102), this protein is Phosphatidylglycerol--prolipoprotein diacylglyceryl transferase.